We begin with the raw amino-acid sequence, 794 residues long: Lon protease (794 aa).

In terms of domain architecture, Lon N-terminal spans 13–204 (VPLYPLREII…KVYMHLTNEV (192 aa)). 356–363 (GPPGVGKT) is an ATP binding site. Residues 592-773 (KDRVGVATGL…REVFVQALNP (182 aa)) form the Lon proteolytic domain. Active-site residues include Ser-679 and Lys-722. The span at 774–788 (TSPAPTAATSARTPA) shows a compositional bias: low complexity. Residues 774-794 (TSPAPTAATSARTPAGAPPPQ) form a disordered region.

This sequence belongs to the peptidase S16 family. Homohexamer. Organized in a ring with a central cavity.

It is found in the cytoplasm. It carries out the reaction Hydrolysis of proteins in presence of ATP.. In terms of biological role, ATP-dependent serine protease that mediates the selective degradation of mutant and abnormal proteins as well as certain short-lived regulatory proteins. Required for cellular homeostasis and for survival from DNA damage and developmental changes induced by stress. Degrades polypeptides processively to yield small peptide fragments that are 5 to 10 amino acids long. Binds to DNA in a double-stranded, site-specific manner. This Citrifermentans bemidjiense (strain ATCC BAA-1014 / DSM 16622 / JCM 12645 / Bem) (Geobacter bemidjiensis) protein is Lon protease.